We begin with the raw amino-acid sequence, 297 residues long: Calponin-1 (297 aa).

The Calponin-homology (CH) domain maps to 28-131 (HQREQELREW…STLLALASMA (104 aa)). Ser-48 bears the Phosphoserine mark. Calponin-like repeat units follow at residues 164–189 (IGLQ…RHLY), 204–229 (ISLQ…RQIF), and 243–268 (VSLQ…RQVY). Thr-170 bears the Phosphothreonine; by ROCK2 mark. Ser-175 is modified (phosphoserine; by ROCK2). Residues Thr-180 and Thr-184 each carry the phosphothreonine; by ROCK2 modification. At Thr-259 the chain carries Phosphothreonine; by ROCK2.

Belongs to the calponin family. In terms of assembly, part of cGMP kinase signaling complex at least composed of ACTA2/alpha-actin, CNN1/calponin H1, PLN/phospholamban, PRKG1 and ITPR1. In terms of tissue distribution, smooth muscle, and tissues containing significant amounts of smooth muscle.

Functionally, thin filament-associated protein that is implicated in the regulation and modulation of smooth muscle contraction. It is capable of binding to actin, calmodulin and tropomyosin. The interaction of calponin with actin inhibits the actomyosin Mg-ATPase activity. This Rattus norvegicus (Rat) protein is Calponin-1 (Cnn1).